A 227-amino-acid polypeptide reads, in one-letter code: Ribosomal RNA large subunit methyltransferase E (227 aa).

5 residues coordinate S-adenosyl-L-methionine: Gly-78, Trp-80, Asp-103, Asp-119, and Asp-143. Lys-183 (proton acceptor) is an active-site residue.

The protein belongs to the class I-like SAM-binding methyltransferase superfamily. RNA methyltransferase RlmE family.

It is found in the cytoplasm. The enzyme catalyses uridine(2552) in 23S rRNA + S-adenosyl-L-methionine = 2'-O-methyluridine(2552) in 23S rRNA + S-adenosyl-L-homocysteine + H(+). Functionally, specifically methylates the uridine in position 2552 of 23S rRNA at the 2'-O position of the ribose in the fully assembled 50S ribosomal subunit. The polypeptide is Ribosomal RNA large subunit methyltransferase E (Rickettsia rickettsii (strain Iowa)).